The sequence spans 468 residues: UDP-N-acetylmuramoylalanine--D-glutamate ligase (468 aa).

ATP is bound at residue 127–133; sequence GTNGKTT.

Belongs to the MurCDEF family.

The protein localises to the cytoplasm. It carries out the reaction UDP-N-acetyl-alpha-D-muramoyl-L-alanine + D-glutamate + ATP = UDP-N-acetyl-alpha-D-muramoyl-L-alanyl-D-glutamate + ADP + phosphate + H(+). The protein operates within cell wall biogenesis; peptidoglycan biosynthesis. In terms of biological role, cell wall formation. Catalyzes the addition of glutamate to the nucleotide precursor UDP-N-acetylmuramoyl-L-alanine (UMA). The sequence is that of UDP-N-acetylmuramoylalanine--D-glutamate ligase from Prochlorococcus marinus (strain MIT 9312).